The chain runs to 150 residues: Large ribosomal subunit protein bL9 (150 aa).

The protein belongs to the bacterial ribosomal protein bL9 family.

Functionally, binds to the 23S rRNA. The chain is Large ribosomal subunit protein bL9 from Latilactobacillus sakei subsp. sakei (strain 23K) (Lactobacillus sakei subsp. sakei).